Here is a 385-residue protein sequence, read N- to C-terminus: UPF0284 protein PMT9312_0438 (385 aa).

This sequence belongs to the UPF0284 family.

The protein is UPF0284 protein PMT9312_0438 of Prochlorococcus marinus (strain MIT 9312).